A 1036-amino-acid chain; its full sequence is Multiple C2 domain and transmembrane region protein 2 (1036 aa).

Positions 1–110 (MRNTTKLVVH…YKDDQVYQRF (110 aa)) constitute a C2 1 domain. Disordered stretches follow at residues 137 to 204 (DQTF…PVQK) and 225 to 246 (RENP…HPQN). Residues 146–155 (PYTSPTQASA) show a composition bias toward polar residues. Over residues 158-168 (TEEDTADSETE) the composition is skewed to acidic residues. Residues 190 to 204 (VEGKKSEEVKEPVQK) are compositionally biased toward basic and acidic residues. C2 domains follow at residues 277-399 (PNAG…PQWY), 440-563 (VHGE…SRWF), and 607-734 (YISD…THSF). Asp316, Asp364, Glu366, and Asp372 together coordinate Ca(2+). The next 2 membrane-spanning stretches (helical) occupy residues 871–891 (FILV…MFFI) and 979–999 (LFIL…FKAI).

It belongs to the MCTP family. Ca(2+) is required as a cofactor. As to expression, expressed in the vascular tissues of roots and rosette leaves. Accumulates in roots meristems. Observed in flowers.

It localises to the cell membrane. May function as a signaling molecule by regulating the trafficking of other regulators. This Arabidopsis thaliana (Mouse-ear cress) protein is Multiple C2 domain and transmembrane region protein 2.